The sequence spans 254 residues: Imidazole glycerol phosphate synthase subunit HisF (254 aa).

Catalysis depends on residues Asp-11 and Asp-130.

Belongs to the HisA/HisF family. As to quaternary structure, heterodimer of HisH and HisF.

Its subcellular location is the cytoplasm. It catalyses the reaction 5-[(5-phospho-1-deoxy-D-ribulos-1-ylimino)methylamino]-1-(5-phospho-beta-D-ribosyl)imidazole-4-carboxamide + L-glutamine = D-erythro-1-(imidazol-4-yl)glycerol 3-phosphate + 5-amino-1-(5-phospho-beta-D-ribosyl)imidazole-4-carboxamide + L-glutamate + H(+). It functions in the pathway amino-acid biosynthesis; L-histidine biosynthesis; L-histidine from 5-phospho-alpha-D-ribose 1-diphosphate: step 5/9. Its function is as follows. IGPS catalyzes the conversion of PRFAR and glutamine to IGP, AICAR and glutamate. The HisF subunit catalyzes the cyclization activity that produces IGP and AICAR from PRFAR using the ammonia provided by the HisH subunit. This chain is Imidazole glycerol phosphate synthase subunit HisF, found in Solibacter usitatus (strain Ellin6076).